We begin with the raw amino-acid sequence, 341 residues long: UPF0283 membrane protein HD_1769 (341 aa).

Transmembrane regions (helical) follow at residues 57–77, 86–106, and 204–224; these read LLAV…QCLI, IDLA…GAII, and ENAI…MIAW.

Belongs to the UPF0283 family.

It localises to the cell inner membrane. The chain is UPF0283 membrane protein HD_1769 from Haemophilus ducreyi (strain 35000HP / ATCC 700724).